Here is a 153-residue protein sequence, read N- to C-terminus: Interleukin-4 (153 aa).

The first 24 residues, 1–24, serve as a signal peptide directing secretion; it reads MGLTSQLLPPLFFLLACAGNFAHG. Intrachain disulfides connect Cys-27/Cys-151, Cys-48/Cys-89, and Cys-70/Cys-123. An N-linked (GlcNAc...) asparagine glycan is attached at Asn-62.

The protein belongs to the IL-4/IL-13 family.

It localises to the secreted. Its function is as follows. Participates in at least several B-cell activation processes as well as of other cell types. It is a costimulator of DNA-synthesis. It induces the expression of class II MHC molecules on resting B-cells. It enhances both secretion and cell surface expression of IgE and IgG1. It also regulates the expression of the low affinity Fc receptor for IgE (CD23) on both lymphocytes and monocytes. Positively regulates IL31RA expression in macrophages. Stimulates autophagy in dendritic cells by interfering with mTORC1 signaling and through the induction of RUFY4. In Papio anubis (Olive baboon), this protein is Interleukin-4 (IL4).